A 100-amino-acid polypeptide reads, in one-letter code: MHLAPHERDKLLVHLAARLARERMDRGLKLNHPEAVALITDHVVEGARDGRGVSELMKSGREVLTAEQVLDGVADMVREVQVEATFPDGTKLVTVHDPIN.

It belongs to the urease gamma subunit family. As to quaternary structure, heterotrimer of UreA (gamma), UreB (beta) and UreC (alpha) subunits. Three heterotrimers associate to form the active enzyme.

The protein localises to the cytoplasm. It catalyses the reaction urea + 2 H2O + H(+) = hydrogencarbonate + 2 NH4(+). It participates in nitrogen metabolism; urea degradation; CO(2) and NH(3) from urea (urease route): step 1/1. This chain is Urease subunit gamma, found in Saccharopolyspora erythraea (strain ATCC 11635 / DSM 40517 / JCM 4748 / NBRC 13426 / NCIMB 8594 / NRRL 2338).